The sequence spans 313 residues: Porphobilinogen deaminase (313 aa).

Cysteine 243 carries the S-(dipyrrolylmethanemethyl)cysteine modification.

It belongs to the HMBS family. Monomer. Dipyrromethane serves as cofactor.

The catalysed reaction is 4 porphobilinogen + H2O = hydroxymethylbilane + 4 NH4(+). The protein operates within porphyrin-containing compound metabolism; protoporphyrin-IX biosynthesis; coproporphyrinogen-III from 5-aminolevulinate: step 2/4. Its function is as follows. Tetrapolymerization of the monopyrrole PBG into the hydroxymethylbilane pre-uroporphyrinogen in several discrete steps. The chain is Porphobilinogen deaminase from Bordetella petrii (strain ATCC BAA-461 / DSM 12804 / CCUG 43448).